The chain runs to 650 residues: uncharacterized protein (650 aa).

This sequence belongs to the mimivirus L515/L516 family.

Its subcellular location is the virion. This is an uncharacterized protein from Acanthamoeba polyphaga (Amoeba).